The chain runs to 95 residues: Large ribosomal subunit protein bL25 (95 aa).

This sequence belongs to the bacterial ribosomal protein bL25 family. As to quaternary structure, part of the 50S ribosomal subunit; part of the 5S rRNA/L5/L18/L25 subcomplex. Contacts the 5S rRNA. Binds to the 5S rRNA independently of L5 and L18.

Functionally, this is one of the proteins that binds to the 5S RNA in the ribosome where it forms part of the central protuberance. This Haemophilus ducreyi (strain 35000HP / ATCC 700724) protein is Large ribosomal subunit protein bL25.